A 247-amino-acid chain; its full sequence is Transmembrane protein 33 (247 aa).

Alanine 2 carries the post-translational modification N-acetylalanine. Residues 2–31 lie on the Lumenal side of the membrane; sequence ADTTPNGPQGAGAVQFMMTNKLDTAMWLSR. Residues 32–52 form a helical membrane-spanning segment; it reads LFTVYCSALFVLPLLGLHEAA. Residues 53 to 100 are Cytoplasmic-facing; that stretch reads SFYQRALLANALTSALRLHQRLPHFQLSRAFLAQALLEDSCHYLLYSL. Residues 101–121 traverse the membrane as a helical segment; that stretch reads IFVNSYPVTMSIFPVLLFSLL. Residues 122–155 lie on the Lumenal side of the membrane; it reads HAATYTKKVLDAKGSNSLPLLRSVLDKLSTNQQN. The chain crosses the membrane as a helical span at residues 156–176; it reads ILKFIACNEIFLMPATVFMLF. The Cytoplasmic segment spans residues 177–247; sequence SGQGSLLQPF…FISRLAPTVA (71 aa).

It belongs to the PER33/POM33 family. Interacts with EIF2AK3. Interacts with ARL6IP1, isoform RTN1-A of RTN1, isoform RTN2-B of RTN2, isoform 3 of RTN3 and isoform 3 of RTN4. Interacts with RNF5. Interacts with RNF26. Interacts with PKD2. In terms of tissue distribution, highly expressed in the liver and significantly in brain, lungs and kidneys.

It localises to the endoplasmic reticulum membrane. The protein localises to the melanosome. It is found in the nucleus envelope. In terms of biological role, acts as a regulator of the tubular endoplasmic reticulum (ER) network by modulating intracellular calcium homeostasis. Mechanistically, stimulates PKD2 calcium-dependent activity. Suppresses the RTN3/4-induced formation of the ER tubules. Positively regulates PERK-mediated and IRE1-mediated unfolded protein response signaling. Plays an essential role in VEGF-mediated release of Ca(2+) from ER stores during angiogenesis. Also plays a role in the modulation of innate immune signaling through the cGAS-STING pathway by interacting with RNF26. Participates in lipid metabolism by acting as a downstream effector of the pyruvate kinase/PKM. Forms a complex with RNF5 to facilitate polyubiquitination and subsequent degradation of SCAP on the ER membrane. The polypeptide is Transmembrane protein 33 (Tmem33) (Rattus norvegicus (Rat)).